Consider the following 328-residue polypeptide: L-serine dehydratase/L-threonine deaminase (328 aa).

N6-(pyridoxal phosphate)lysine is present on Lys41. Position 128 (Pro128) interacts with pyridoxal 5'-phosphate.

The protein belongs to the serine/threonine dehydratase family. In terms of assembly, homodimer. Pyridoxal 5'-phosphate is required as a cofactor. In terms of tissue distribution, predominantly expressed in the perivenous regions of the liver.

The protein resides in the cytoplasm. The catalysed reaction is L-serine = pyruvate + NH4(+). It carries out the reaction L-threonine = 2-oxobutanoate + NH4(+). The protein operates within carbohydrate biosynthesis; gluconeogenesis. In terms of biological role, catalyzes the pyridoxal-phosphate-dependent dehydrative deamination of L-threonine and L-serine to ammonia and alpha-ketobutyrate and pyruvate, respectively. In Homo sapiens (Human), this protein is L-serine dehydratase/L-threonine deaminase (SDS).